Here is a 101-residue protein sequence, read N- to C-terminus: Large ribosomal subunit protein uL24 (101 aa).

The protein belongs to the universal ribosomal protein uL24 family. Part of the 50S ribosomal subunit.

Its function is as follows. One of two assembly initiator proteins, it binds directly to the 5'-end of the 23S rRNA, where it nucleates assembly of the 50S subunit. In terms of biological role, one of the proteins that surrounds the polypeptide exit tunnel on the outside of the subunit. The chain is Large ribosomal subunit protein uL24 from Streptococcus thermophilus (strain ATCC BAA-491 / LMD-9).